A 998-amino-acid polypeptide reads, in one-letter code: Kinesin-like protein KIF19 (998 aa).

The region spanning 11-346 is the Kinesin motor domain; that stretch reads QLMVALRVRP…LTYAGRAKNI (336 aa). 104-111 is an ATP binding site; that stretch reads GPTGCGKT. Coiled coils occupy residues 360-391 and 424-452; these read HIAQ…RGQA and EQLA…EVQI. A compositionally biased stretch (basic and acidic residues) spans 482 to 494; it reads ECYAKDDSEKDSD. Residues 482–503 form a disordered region; it reads ECYAKDDSEKDSDTGDDQPDIL. A coiled-coil region spans residues 507–552; the sequence is EVAAARESIAALVDEQKQLRKQKLALEQRCRELRARGRRLEETLPR. Polar residues-rich tracts occupy residues 662 to 676, 684 to 697, 746 to 761, and 836 to 852; these read SSLP…SLTP, KTLS…QNSA, SLGS…SENL, and TLQH…STGE. 4 disordered regions span residues 662-706, 746-765, 794-911, and 948-998; these read SSLP…TESE, SLGS…SEIP, GTEG…THLL, and KLPP…SRHN. The segment covering 989–998 has biased composition (basic and acidic residues); that stretch reads HGKDGCSRHN.

It belongs to the TRAFAC class myosin-kinesin ATPase superfamily. Kinesin family.

Its subcellular location is the cytoplasm. It localises to the cytoskeleton. The protein resides in the cell projection. It is found in the cilium. Plus end-directed microtubule-dependent motor protein that regulates the length of motile cilia by mediating depolymerization of microtubules at ciliary tips. The sequence is that of Kinesin-like protein KIF19 (KIF19) from Homo sapiens (Human).